The sequence spans 213 residues: Superoxide dismutase [Mn] (213 aa).

His-27, His-82, Asp-168, and His-172 together coordinate Mn(2+).

This sequence belongs to the iron/manganese superoxide dismutase family. As to quaternary structure, homodimer. It depends on Mn(2+) as a cofactor.

The catalysed reaction is 2 superoxide + 2 H(+) = H2O2 + O2. Destroys superoxide anion radicals which are normally produced within the cells and which are toxic to biological systems. The chain is Superoxide dismutase [Mn] (sodA) from Mannheimia haemolytica (Pasteurella haemolytica).